Reading from the N-terminus, the 191-residue chain is ECF RNA polymerase sigma factor ShbA (191 aa).

Residues 27 to 98 (LLAHVHPLAL…HKVADLQRAA (72 aa)) form a sigma-70 factor domain-2 region. Positions 100–122 (RHPGSTAVPSDEMPERPDDSLGP) are disordered. A compositionally biased stretch (basic and acidic residues) spans 112-122 (MPERPDDSLGP). A sigma-70 factor domain-4 region spans residues 138-187 (LLANLPENQRELLVLRVAVGLTAEETGQMLGMSPGAVRVAQHRALSRLRA). The segment at residues 160–179 (AEETGQMLGMSPGAVRVAQH) is a DNA-binding region (H-T-H motif).

It belongs to the sigma-70 factor family. ECF subfamily.

Its function is as follows. Sigma factors are initiation factors that promote the attachment of RNA polymerase to specific initiation sites and are then released. Extracytoplasmic function (ECF) sigma factors are held in an inactive form by an anti-sigma factor until released. This alternative sigma factor governs the transcription of the principal sigma factor HrdB (SigA) throughout growth. Acts by binding to the promoter region. In Streptomyces griseus subsp. griseus (strain JCM 4626 / CBS 651.72 / NBRC 13350 / KCC S-0626 / ISP 5235), this protein is ECF RNA polymerase sigma factor ShbA.